Reading from the N-terminus, the 236-residue chain is Eukaryotic translation initiation factor 3 subunit J (236 aa).

Residues 1 to 88 (MADDWESAAD…EAEAQRVASL (88 aa)) form a disordered region. Acidic residues predominate over residues 28–46 (GEDEDEDIKDSWEDEEEKK). Composition is skewed to basic and acidic residues over residues 47–58 (DEEKPTKTEAPA) and 68–77 (AKLEQQARLE).

The protein belongs to the eIF-3 subunit J family. In terms of assembly, component of the eukaryotic translation initiation factor 3 (eIF-3) complex. The eIF-3 complex interacts with pix.

The protein localises to the cytoplasm. In terms of biological role, component of the eukaryotic translation initiation factor 3 (eIF-3) complex, which is involved in protein synthesis of a specialized repertoire of mRNAs and, together with other initiation factors, stimulates binding of mRNA and methionyl-tRNAi to the 40S ribosome. The eIF-3 complex specifically targets and initiates translation of a subset of mRNAs involved in cell proliferation. The protein is Eukaryotic translation initiation factor 3 subunit J of Drosophila erecta (Fruit fly).